The primary structure comprises 343 residues: Putative mediator of RNA polymerase II transcription subunit 4 (343 aa).

The stretch at 86-125 forms a coiled coil; sequence LKKLEKHQKIQKEITEIQKEIEEKDKLISTLALNLKDIES. Residues 247–343 form a disordered region; the sequence is ISSPFSIGGN…DEESEEVEWD (97 aa). Over residues 271–316 the composition is skewed to low complexity; the sequence is QQQQQQQQQPQQQLSQSQQSQQQTESELQPIQSILQPPQQLNIDLD. Acidic residues predominate over residues 317–343; that stretch reads LNPDLDSSGDDDDEDDDDEESEEVEWD.

Belongs to the Mediator complex subunit 4 family. As to quaternary structure, component of the Mediator complex.

It localises to the nucleus. Functionally, component of the Mediator complex, a coactivator involved in the regulated transcription of nearly all RNA polymerase II-dependent genes. Mediator functions as a bridge to convey information from gene-specific regulatory proteins to the basal RNA polymerase II transcription machinery. Mediator is recruited to promoters by direct interactions with regulatory proteins and serves as a scaffold for the assembly of a functional preinitiation complex with RNA polymerase II and the general transcription factors. This chain is Putative mediator of RNA polymerase II transcription subunit 4 (med4), found in Dictyostelium discoideum (Social amoeba).